Here is a 122-residue protein sequence, read N- to C-terminus: Large ribosomal subunit protein uL14 (122 aa).

It belongs to the universal ribosomal protein uL14 family. In terms of assembly, part of the 50S ribosomal subunit. Forms a cluster with proteins L3 and L19. In the 70S ribosome, L14 and L19 interact and together make contacts with the 16S rRNA in bridges B5 and B8.

Its function is as follows. Binds to 23S rRNA. Forms part of two intersubunit bridges in the 70S ribosome. The sequence is that of Large ribosomal subunit protein uL14 from Acidothermus cellulolyticus (strain ATCC 43068 / DSM 8971 / 11B).